Reading from the N-terminus, the 1166-residue chain is Tectonin beta-propeller repeat-containing protein 1 (1166 aa).

4 TECPR repeats span residues leucine 209 to aspartate 240, aspartate 254 to glutamate 285, serine 301 to valine 332, and aspartate 344 to valine 376. Phosphoserine is present on residues serine 386, serine 388, serine 391, serine 413, and serine 418. Residues valine 403 to tryptophan 492 form a disordered region. The segment covering glycine 407–serine 418 has biased composition (polar residues). Residues glutamate 420–aspartate 436 are compositionally biased toward basic and acidic residues. Residues asparagine 437–serine 446 show a composition bias toward polar residues. A compositionally biased stretch (basic and acidic residues) spans lysine 447–glutamate 456. In terms of domain architecture, PH spans lysine 616 to cysteine 722. Residues glutamine 734–leucine 761 form a TECPR 5 repeat. Serine 943 carries the post-translational modification Phosphoserine. 4 TECPR repeats span residues isoleucine 958–glycine 989, tyrosine 1003–proline 1034, threonine 1049–serine 1080, and aspartate 1092–isoleucine 1132. Residues arginine 1147–cysteine 1166 form a disordered region.

It belongs to the TECPR1 family. Interacts with ATG5; the interaction is direct. Interacts with WIPI2. Interacts with the ATG5-ATG12 conjugate, the interaction is however mutually exclusive with ATG16, since it does not interact with ATG12-ATG5-ATG16 complex.

It localises to the cytoplasmic vesicle. The protein localises to the autophagosome membrane. Its subcellular location is the lysosome membrane. Functionally, tethering factor involved in autophagy. Involved in autophagosome maturation by promoting the autophagosome fusion with lysosomes: acts by associating with both the ATG5-ATG12 conjugate and phosphatidylinositol-3-phosphate (PtdIns(3)P) present at the surface of autophagosomes. Also involved in selective autophagy against bacterial pathogens, by being required for phagophore/preautophagosomal structure biogenesis and maturation. This chain is Tectonin beta-propeller repeat-containing protein 1 (Tecpr1), found in Rattus norvegicus (Rat).